Here is a 148-residue protein sequence, read N- to C-terminus: SsrA-binding protein (148 aa).

It belongs to the SmpB family.

The protein localises to the cytoplasm. In terms of biological role, required for rescue of stalled ribosomes mediated by trans-translation. Binds to transfer-messenger RNA (tmRNA), required for stable association of tmRNA with ribosomes. tmRNA and SmpB together mimic tRNA shape, replacing the anticodon stem-loop with SmpB. tmRNA is encoded by the ssrA gene; the 2 termini fold to resemble tRNA(Ala) and it encodes a 'tag peptide', a short internal open reading frame. During trans-translation Ala-aminoacylated tmRNA acts like a tRNA, entering the A-site of stalled ribosomes, displacing the stalled mRNA. The ribosome then switches to translate the ORF on the tmRNA; the nascent peptide is terminated with the 'tag peptide' encoded by the tmRNA and targeted for degradation. The ribosome is freed to recommence translation, which seems to be the essential function of trans-translation. The chain is SsrA-binding protein from Ehrlichia ruminantium (strain Welgevonden).